The following is a 138-amino-acid chain: ATP synthase epsilon chain (138 aa).

Belongs to the ATPase epsilon chain family. F-type ATPases have 2 components, CF(1) - the catalytic core - and CF(0) - the membrane proton channel. CF(1) has five subunits: alpha(3), beta(3), gamma(1), delta(1), epsilon(1). CF(0) has three main subunits: a, b and c.

It localises to the cell inner membrane. Functionally, produces ATP from ADP in the presence of a proton gradient across the membrane. This chain is ATP synthase epsilon chain, found in Psychrobacter sp. (strain PRwf-1).